Consider the following 471-residue polypeptide: Alkaline phosphatase (471 aa).

A signal peptide spans 1 to 21 (MKQSTIALALLPLLFTPVTKA). Asp73 contacts Mg(2+). Asp73 provides a ligand contact to Zn(2+). The Phosphoserine intermediate role is filled by Ser124. The Mg(2+) site is built by Asp175 and Thr177. Cystine bridges form between Cys190–Cys200 and Cys308–Cys358. Mg(2+) is bound at residue Glu344. Residues Asp349, His353, Asp391, His392, and His434 each contribute to the Zn(2+) site.

It belongs to the alkaline phosphatase family. As to quaternary structure, isozymes 1 and 3 are a dimer of identical chains, isozyme 2 is a dimer of heterogeneous chains, one of each of the subunits from isozymes 1 and 3. Requires Mg(2+) as cofactor. Zn(2+) serves as cofactor.

It is found in the periplasm. It carries out the reaction a phosphate monoester + H2O = an alcohol + phosphate. The chain is Alkaline phosphatase (phoA) from Escherichia coli (strain K12).